Consider the following 109-residue polypeptide: Fluoride-specific ion channel FluC 1 (109 aa).

Transmembrane regions (helical) follow at residues 21-41 (FYFK…GFFI), 52-72 (ILFS…HFLY), and 83-103 (LFIY…IGFQ).

Belongs to the fluoride channel Fluc/FEX (TC 1.A.43) family.

It localises to the cell inner membrane. It catalyses the reaction fluoride(in) = fluoride(out). In terms of biological role, fluoride-specific ion channel. Important for reducing fluoride concentration in the cell, thus reducing its toxicity. This chain is Fluoride-specific ion channel FluC 1, found in Prochlorococcus marinus subsp. pastoris (strain CCMP1986 / NIES-2087 / MED4).